Here is a 531-residue protein sequence, read N- to C-terminus: Phosphomethylpyrimidine synthase (531 aa).

Substrate contacts are provided by residues Asn-167, Met-196, Tyr-225, His-261, 281 to 283 (SRG), 322 to 325 (DALR), and Glu-361. Zn(2+) is bound at residue His-365. Tyr-388 serves as a coordination point for substrate. His-429 is a Zn(2+) binding site. [4Fe-4S] cluster-binding residues include Cys-511, Cys-514, and Cys-519.

The protein belongs to the ThiC family. The cofactor is [4Fe-4S] cluster.

The enzyme catalyses 5-amino-1-(5-phospho-beta-D-ribosyl)imidazole + S-adenosyl-L-methionine = 4-amino-2-methyl-5-(phosphooxymethyl)pyrimidine + CO + 5'-deoxyadenosine + formate + L-methionine + 3 H(+). The protein operates within cofactor biosynthesis; thiamine diphosphate biosynthesis. Functionally, catalyzes the synthesis of the hydroxymethylpyrimidine phosphate (HMP-P) moiety of thiamine from aminoimidazole ribotide (AIR) in a radical S-adenosyl-L-methionine (SAM)-dependent reaction. In Chlorobium chlorochromatii (strain CaD3), this protein is Phosphomethylpyrimidine synthase.